A 471-amino-acid chain; its full sequence is UDP-N-acetylmuramate--L-alanine ligase (471 aa).

112–118 serves as a coordination point for ATP; that stretch reads GTHGKTT.

The protein belongs to the MurCDEF family.

The protein resides in the cytoplasm. The catalysed reaction is UDP-N-acetyl-alpha-D-muramate + L-alanine + ATP = UDP-N-acetyl-alpha-D-muramoyl-L-alanine + ADP + phosphate + H(+). The protein operates within cell wall biogenesis; peptidoglycan biosynthesis. Functionally, cell wall formation. This chain is UDP-N-acetylmuramate--L-alanine ligase, found in Aromatoleum aromaticum (strain DSM 19018 / LMG 30748 / EbN1) (Azoarcus sp. (strain EbN1)).